The following is a 433-amino-acid chain: Tyrosine--tRNA ligase (433 aa).

Tyrosine 34 provides a ligand contact to L-tyrosine. The short motif at 39 to 48 is the 'HIGH' region element; the sequence is PTASSLHVGS. L-tyrosine-binding residues include tyrosine 169 and glutamine 173. A 'KMSKS' region motif is present at residues 229–233; it reads KMGKT. Residue lysine 232 participates in ATP binding. The S4 RNA-binding domain maps to 364–432; sequence IPAFVLFHTV…RYHTIVVRKG (69 aa).

This sequence belongs to the class-I aminoacyl-tRNA synthetase family. TyrS type 1 subfamily. In terms of assembly, homodimer.

It localises to the cytoplasm. The catalysed reaction is tRNA(Tyr) + L-tyrosine + ATP = L-tyrosyl-tRNA(Tyr) + AMP + diphosphate + H(+). Its function is as follows. Catalyzes the attachment of tyrosine to tRNA(Tyr) in a two-step reaction: tyrosine is first activated by ATP to form Tyr-AMP and then transferred to the acceptor end of tRNA(Tyr). In Desulfosudis oleivorans (strain DSM 6200 / JCM 39069 / Hxd3) (Desulfococcus oleovorans), this protein is Tyrosine--tRNA ligase.